A 264-amino-acid chain; its full sequence is ATP synthase subunit a (264 aa).

6 consecutive transmembrane segments (helical) span residues 29–49 (TWHI…LWIF), 87–107 (NALI…MNFM), 134–154 (DVNI…YYSI), 177–197 (IPVN…SLAL), 208–228 (LIFI…SLGV), and 235–255 (LIFH…LTIV).

The protein belongs to the ATPase A chain family. In terms of assembly, F-type ATPases have 2 components, CF(1) - the catalytic core - and CF(0) - the membrane proton channel. CF(1) has five subunits: alpha(3), beta(3), gamma(1), delta(1), epsilon(1). CF(0) has three main subunits: a(1), b(2) and c(9-12). The alpha and beta chains form an alternating ring which encloses part of the gamma chain. CF(1) is attached to CF(0) by a central stalk formed by the gamma and epsilon chains, while a peripheral stalk is formed by the delta and b chains.

It localises to the cell inner membrane. Key component of the proton channel; it plays a direct role in the translocation of protons across the membrane. The chain is ATP synthase subunit a from Shewanella sp. (strain ANA-3).